The sequence spans 216 residues: Protein Syd (216 aa).

It belongs to the Syd family.

It is found in the cell inner membrane. Functionally, interacts with the SecY protein in vivo. May bind preferentially to an uncomplexed state of SecY, thus functioning either as a chelating agent for excess SecY in the cell or as a regulatory factor that negatively controls the translocase function. In Shewanella baltica (strain OS223), this protein is Protein Syd.